We begin with the raw amino-acid sequence, 475 residues long: LEC14B homolog (475 aa).

The interval 1 to 34 (MSYRTRFGKDNSACDSGNAVEGSGSSKGPNEVSN) is disordered. The segment covering 23 to 33 (SGSSKGPNEVS) has biased composition (polar residues). 5 WD repeats span residues 211-240 (DEFG…YVYD), 252-283 (AHSS…KVWD), 299-329 (GHLE…QLWD), 375-411 (GHGV…YIYD), and 423-453 (HHEG…ARWE).

It belongs to the WD repeat LEC14B family.

This chain is LEC14B homolog, found in Prunus armeniaca (Apricot).